The following is a 164-amino-acid chain: Ribosome maturation factor RimM (164 aa).

The region spanning 90 to 161 is the PRC barrel domain; sequence KGSYFIADLI…TVTIKPLEIW (72 aa).

The protein belongs to the RimM family. Binds ribosomal protein uS19.

It localises to the cytoplasm. An accessory protein needed during the final step in the assembly of 30S ribosomal subunit, possibly for assembly of the head region. Essential for efficient processing of 16S rRNA. May be needed both before and after RbfA during the maturation of 16S rRNA. It has affinity for free ribosomal 30S subunits but not for 70S ribosomes. The polypeptide is Ribosome maturation factor RimM (Clostridium botulinum (strain ATCC 19397 / Type A)).